We begin with the raw amino-acid sequence, 650 residues long: Chaperone protein HtpG (650 aa).

Positions 1–349 (MSKTVKKFET…SSDLPLNVSR (349 aa)) are a; substrate-binding. Residues 350–566 (EILQEDVQIK…EHGLNANMER (217 aa)) are b. Residues 567–650 (ILRAMNQTVP…VADGKAAAGE (84 aa)) form a c region.

Belongs to the heat shock protein 90 family. Homodimer.

It is found in the cytoplasm. In terms of biological role, molecular chaperone. Has ATPase activity. The chain is Chaperone protein HtpG from Geobacter sulfurreducens (strain ATCC 51573 / DSM 12127 / PCA).